The primary structure comprises 822 residues: Sodium/hydrogen exchanger 1 (822 aa).

The Extracellular portion of the chain corresponds to 1-102 (MMLRWSGIWG…FPVLDIDYLH (102 aa)). Residues 41–73 (SPTANTIRGAEPPRERSIGDVTTAPSEPVHHPD) form a disordered region. A helical transmembrane segment spans residues 103–125 (VRTPFEISLWILLACLMKIGFHV). Topologically, residues 126 to 134 (IPTISSIVP) are cytoplasmic. Residues 135–152 (ESCLLIVVGLLVGGLIKG) traverse the membrane as a helical segment. The Extracellular segment spans residues 153–162 (VGETPPFLQS). The chain crosses the membrane as a helical span at residues 163–180 (DVFFLFLLPPIILDAGYF). At 181 to 190 (LPLRQFTENL) the chain is on the cytoplasmic side. A helical transmembrane segment spans residues 191–219 (GTILIFAVVGTLWNAFFLGGLLYAVCLVG). The Extracellular segment spans residues 220–226 (GEQINNI). Residues 227–253 (GLLDTLLFGSIISAVDPVAVVAVFEEI) form a helical membrane-spanning segment. The Cytoplasmic segment spans residues 254–256 (HIN). The helical transmembrane segment at 257–287 (ELLHILVFGESLLNDAVTVVLYHLFEEFANY) threads the bilayer. Topologically, residues 288–291 (DSIG) are extracellular. Residues 292–326 (ISDIFLGFLSFFVVALGGVFVGVVYGVIAAFTSRF) form a helical membrane-spanning segment. Residues 327–332 (TSHIRV) lie on the Cytoplasmic side of the membrane. Residues 333–345 (IEPLFVFLYSYMA) form a helical membrane-spanning segment. Residues 346–354 (YLSAELFHL) lie on the Extracellular side of the membrane. The chain crosses the membrane as a helical span at residues 355–375 (SGIMALIASGVVMRPYVEANI). The Cytoplasmic segment spans residues 376–377 (SH). Residues 378 to 408 (KSHTTIKYFLKMWSSVSETLIFIFLGVSTVA) form a helical membrane-spanning segment. Residues 409 to 414 (GSHQWN) lie on the Extracellular side of the membrane. Residues 415–442 (WTFVISTLLFCLIARVLGVLVLTWFINK) form a helical membrane-spanning segment. Over 443 to 448 (FRIVKL) the chain is Cytoplasmic. Residues 449-473 (TPKDQFIIAYGGLRGAIAFSLGYLM) form a helical membrane-spanning segment. The Extracellular portion of the chain corresponds to 474–479 (DKKHFP). A helical membrane pass occupies residues 480–509 (MCDLFLTAIITVIFFTVFVQGMTIRPLVDL). Residues 507–549 (VDLLAVKKKQETKRSINEEIHTQFLDHLLTGIEDICGHYGHHH) form an interaction with TESC region. The Cytoplasmic portion of the chain corresponds to 510–822 (LAVKKKQETK…EGEPFIPKGE (313 aa)). Positions 513 to 520 (KKKQETKR) are PI(4,5)P2-binding region. Positions 519–549 (KRSINEEIHTQFLDHLLTGIEDICGHYGHHH) are interaction with CHP2. The confers pH-dependent PI(4,5)P2 binding stretch occupies residues 544–549 (HYGHHH). The tract at residues 556-564 (RFNKKYVKK) is PI(4,5)P2-binding region. 2 positions are modified to phosphoserine: Ser603 and Ser606. Position 607 is a phosphothreonine (Thr607). 2 positions are modified to phosphoserine: Ser609 and Ser652. The interval 637–822 (KILRSNLQKT…EGEPFIPKGE (186 aa)) is interaction with TESC. The tract at residues 637–822 (KILRSNLQKT…EGEPFIPKGE (186 aa)) is interaction with CALM1. The tract at residues 688 to 691 (LTVP) is interaction with PPP3CA. A phosphoserine mark is found at Ser697, Ser701, and Ser707. Positions 719–724 (PVITID) are interaction with PPP3CA. 3 positions are modified to phosphoserine: Ser727, Ser730, and Ser733. The disordered stretch occupies residues 752 to 822 (PTRLTRGEED…EGEPFIPKGE (71 aa)). At Thr756 the chain carries Phosphothreonine. A compositionally biased stretch (acidic residues) spans 759-768 (EEDEDEDEDG). Residue Thr786 is modified to Phosphothreonine. 3 positions are modified to phosphoserine: Ser792, Ser794, and Ser803.

It belongs to the monovalent cation:proton antiporter 1 (CPA1) transporter (TC 2.A.36) family. As to quaternary structure, homodimer; dimerization is crucial for its function. Oligomer. Interacts with CALM in a calcium-dependent manner. Interacts with TESC. Interacts (via the juxtamembrane region of the cytoplasmic C-terminal domain) with CHP1; the interaction occurs at the plasma membrane in a calcium-dependent manner. Interacts with CHP2; the interaction occurs in a calcium-dependent manner. Interacts with EZR; regulates the cytoskeletal interactions of SLC9A1 and promotes stress fiber formation. Ubiquitinated, leading to its degradation by the proteasome. Ubiquitination is reduced by CHP1. Post-translationally, O-glycosylated. In terms of processing, palmitoylated; may play a major role in SLC9A1 regulation. Phosphorylation at Thr-786 increases SLC9A1 activity. Specifically dephosphorylated at Thr-786 by PPP3CA that negatively regulates SLC9A1 activity. Phosphorylation at Ser-652 by AKT1 reduces SLC9A1 binding to CALM1.

The protein resides in the cell membrane. Its subcellular location is the basolateral cell membrane. It carries out the reaction Na(+)(in) + H(+)(out) = Na(+)(out) + H(+)(in). The catalysed reaction is Li(+)(out) + H(+)(in) = Li(+)(in) + H(+)(out). The enzyme catalyses Li(+)(in) + Na(+)(out) = Li(+)(out) + Na(+)(in). With respect to regulation, activated at acidic pHs. Inhibited by amiloride and 5-amino-substituted derivatives. Inhibited by cariporide and eniporide. Phosphatidylinositol 4,5-bisphosphate (PI(4,5)P2) and phosphatidylinositol 3,4,5-trisphosphate (PI(3,4,5)P3) bind and differentially regulate SLC9A1 activity. Electroneutral Na(+) /H(+) antiporter that extrudes Na(+) in exchange for external protons driven by the inward sodium ion chemical gradient, protecting cells from acidification that occurs from metabolism. Exchanges intracellular H(+) ions for extracellular Na(+) in 1:1 stoichiometry. Plays a key role in maintening intracellular pH neutral and cell volume, and thus is important for cell growth, proliferation, migration and survival. In addition, can transport lithium Li(+) and also functions as a Na(+)/Li(+) antiporter. SLC9A1 also functions in membrane anchoring and organization of scaffolding complexes that coordinate signaling inputs. This is Sodium/hydrogen exchanger 1 (SLC9A1) from Cricetulus griseus (Chinese hamster).